Here is a 382-residue protein sequence, read N- to C-terminus: Pyrimidine monooxygenase RutA (382 aa).

FMN-binding positions include 68–69 (IK), Asn-134, Glu-143, 159–160 (RY), and Ser-209.

This sequence belongs to the NtaA/SnaA/DszA monooxygenase family. RutA subfamily.

It catalyses the reaction uracil + FMNH2 + NADH + O2 = (Z)-3-ureidoacrylate + FMN + NAD(+) + H2O + H(+). The enzyme catalyses thymine + FMNH2 + NADH + O2 = (Z)-2-methylureidoacrylate + FMN + NAD(+) + H2O + H(+). Functionally, catalyzes the pyrimidine ring opening between N-3 and C-4 by an unusual flavin hydroperoxide-catalyzed mechanism, adding oxygen atoms in the process to yield ureidoacrylate peracid, that immediately reacts with FMN forming ureidoacrylate and FMN-N(5)-oxide. The FMN-N(5)-oxide reacts spontaneously with NADH to produce FMN. Requires the flavin reductase RutF to regenerate FMN in vivo. The sequence is that of Pyrimidine monooxygenase RutA from Escherichia coli (strain 55989 / EAEC).